The primary structure comprises 201 residues: Lipopolysaccharide core heptose(II)-phosphate phosphatase (201 aa).

The first 35 residues, 1-35 (MLAFTLRFIKNKRYLATLAGALVIIAGLTSQHAWS), serve as a signal peptide directing secretion.

This sequence belongs to the phosphoglycerate mutase family. Ais subfamily.

The protein resides in the periplasm. The protein operates within bacterial outer membrane biogenesis; lipopolysaccharide metabolism. Catalyzes the dephosphorylation of heptose(II) of the outer membrane lipopolysaccharide core. The polypeptide is Lipopolysaccharide core heptose(II)-phosphate phosphatase (Salmonella heidelberg (strain SL476)).